The sequence spans 211 residues: tRNA (guanine-N(7)-)-methyltransferase (211 aa).

S-adenosyl-L-methionine-binding residues include D40, E65, N92, and D118. D118 is an active-site residue. Substrate contacts are provided by K122 and D154.

Belongs to the class I-like SAM-binding methyltransferase superfamily. TrmB family.

It catalyses the reaction guanosine(46) in tRNA + S-adenosyl-L-methionine = N(7)-methylguanosine(46) in tRNA + S-adenosyl-L-homocysteine. It participates in tRNA modification; N(7)-methylguanine-tRNA biosynthesis. Its function is as follows. Catalyzes the formation of N(7)-methylguanine at position 46 (m7G46) in tRNA. This is tRNA (guanine-N(7)-)-methyltransferase from Microcystis aeruginosa (strain NIES-843 / IAM M-2473).